The sequence spans 243 residues: Protein VERNALIZATION 1 (243 aa).

In terms of domain architecture, MADS-box spans 1-61 (MGRGKVQLKR…GKLYEFATDS (61 aa)). Residues 88–178 (QGNWCHEYRK…QKELVEKQKA (91 aa)) enclose the K-box domain. Residues 122–178 (LKELQQLEQQLESSLKHIRSRKNQLMHESISELQRKERSLQEENKALQKELVEKQKA) adopt a coiled-coil conformation. Residues 173-243 (VEKQKAHTQQ…PPWMVSHISG (71 aa)) are disordered. Residues 179-192 (HTQQAQWEQTHPQT) are compositionally biased toward polar residues.

It localises to the nucleus. In terms of biological role, component of a grass-specific mechanism of vernalization, a process by which prolonged cold exposure provides competence to flower in daylengths longer than 12 hours. Involved in the exit of vernalization and confers flowering competency at the expense of freezing tolerance, probably by promoting the expression of VRN3; this process is essential in cv. Bd29-1 for flowering but seems do not occur in cv. Bd21. In Brachypodium distachyon (Purple false brome), this protein is Protein VERNALIZATION 1.